The sequence spans 51 residues: Insulin (51 aa).

3 cysteine pairs are disulfide-bonded: Cys7–Cys37, Cys19–Cys50, and Cys36–Cys41.

This sequence belongs to the insulin family. In terms of assembly, heterodimer of a B chain and an A chain linked by two disulfide bonds.

It localises to the secreted. Functionally, insulin decreases blood glucose concentration. It increases cell permeability to monosaccharides, amino acids and fatty acids. It accelerates glycolysis, the pentose phosphate cycle, and glycogen synthesis in liver. The sequence is that of Insulin (INS) from Didelphis virginiana (North American opossum).